The sequence spans 161 residues: SsrA-binding protein (161 aa).

This sequence belongs to the SmpB family.

The protein localises to the cytoplasm. In terms of biological role, required for rescue of stalled ribosomes mediated by trans-translation. Binds to transfer-messenger RNA (tmRNA), required for stable association of tmRNA with ribosomes. tmRNA and SmpB together mimic tRNA shape, replacing the anticodon stem-loop with SmpB. tmRNA is encoded by the ssrA gene; the 2 termini fold to resemble tRNA(Ala) and it encodes a 'tag peptide', a short internal open reading frame. During trans-translation Ala-aminoacylated tmRNA acts like a tRNA, entering the A-site of stalled ribosomes, displacing the stalled mRNA. The ribosome then switches to translate the ORF on the tmRNA; the nascent peptide is terminated with the 'tag peptide' encoded by the tmRNA and targeted for degradation. The ribosome is freed to recommence translation, which seems to be the essential function of trans-translation. The chain is SsrA-binding protein from Psychromonas ingrahamii (strain DSM 17664 / CCUG 51855 / 37).